The primary structure comprises 140 residues: Austinoid biosynthesis clusters protein S (140 aa).

This sequence belongs to the trt14 isomerase family. As to quaternary structure, homodimer.

It participates in secondary metabolite biosynthesis; terpenoid biosynthesis. Part of the gene cluster B that mediates the biosynthesis of austinol and dehydroaustinol, two fungal meroterpenoids. The first step of the pathway is the synthesis of 3,5-dimethylorsellinic acid by the polyketide synthase ausA. 3,5-dimethylorsellinic acid is then prenylated by the polyprenyl transferase ausN. Further epoxidation by the FAD-dependent monooxygenase ausM and cyclization by the probable terpene cyclase ausL lead to the formation of protoaustinoid A. Protoaustinoid A is then oxidized to spiro-lactone preaustinoid A3 by the combined action of the FAD-binding monooxygenases ausB and ausC, and the dioxygenase ausE. Acid-catalyzed keto-rearrangement and ring contraction of the tetraketide portion of preaustinoid A3 by ausJ lead to the formation of preaustinoid A4. The aldo-keto reductase ausK, with the help of ausH, is involved in the next step by transforming preaustinoid A4 into isoaustinone which is in turn hydroxylated by the P450 monooxygenase ausI to form austinolide. Finally, the cytochrome P450 monooxygenase ausG modifies austinolide to austinol. Austinol can be further modified to dehydroaustinol which forms a diffusible complex with diorcinol that initiates conidiation. Due to genetic rearrangements of the clusters and the subsequent loss of some enzymes, the end products of the Emericella nidulans austinoid biosynthesis clusters are austinol and dehydroaustinol, even if additional enzymes, such as the O-acetyltransferase ausQ and the cytochrome P450 monooxygenase ausR are still functional. AusS is necessary for austinoids production and may play a possible function as a regulator. This is Austinoid biosynthesis clusters protein S from Emericella nidulans (strain FGSC A4 / ATCC 38163 / CBS 112.46 / NRRL 194 / M139) (Aspergillus nidulans).